The sequence spans 160 residues: Nucleotide-binding protein VC_1508 (160 aa).

This sequence belongs to the YajQ family.

In terms of biological role, nucleotide-binding protein. The sequence is that of Nucleotide-binding protein VC_1508 from Vibrio cholerae serotype O1 (strain ATCC 39315 / El Tor Inaba N16961).